The sequence spans 342 residues: Aspartate carbamoyltransferase catalytic subunit (342 aa).

Residues arginine 54 and threonine 55 each contribute to the carbamoyl phosphate site. Lysine 82 is a binding site for L-aspartate. Residues arginine 104, histidine 134, and glutamine 137 each coordinate carbamoyl phosphate. L-aspartate contacts are provided by arginine 177 and arginine 232. Carbamoyl phosphate-binding residues include glycine 277 and proline 278.

This sequence belongs to the aspartate/ornithine carbamoyltransferase superfamily. ATCase family. Heterododecamer (2C3:3R2) of six catalytic PyrB chains organized as two trimers (C3), and six regulatory PyrI chains organized as three dimers (R2).

It carries out the reaction carbamoyl phosphate + L-aspartate = N-carbamoyl-L-aspartate + phosphate + H(+). Its pathway is pyrimidine metabolism; UMP biosynthesis via de novo pathway; (S)-dihydroorotate from bicarbonate: step 2/3. Its function is as follows. Catalyzes the condensation of carbamoyl phosphate and aspartate to form carbamoyl aspartate and inorganic phosphate, the committed step in the de novo pyrimidine nucleotide biosynthesis pathway. In Pseudarthrobacter chlorophenolicus (strain ATCC 700700 / DSM 12829 / CIP 107037 / JCM 12360 / KCTC 9906 / NCIMB 13794 / A6) (Arthrobacter chlorophenolicus), this protein is Aspartate carbamoyltransferase catalytic subunit.